The sequence spans 68 residues: Sec-independent protein translocase protein TatA (68 aa).

The chain crosses the membrane as a helical span at residues 1–21 (MGSLSIWHWLIVLLIVVLVFG). The tract at residues 42 to 68 (GMNEGAKDGQPPAKDAGRIIDGEADKK) is disordered. Positions 56–68 (DAGRIIDGEADKK) are enriched in basic and acidic residues.

The protein belongs to the TatA/E family. In terms of assembly, the Tat system comprises two distinct complexes: a TatABC complex, containing multiple copies of TatA, TatB and TatC subunits, and a separate TatA complex, containing only TatA subunits. Substrates initially bind to the TatABC complex, which probably triggers association of the separate TatA complex to form the active translocon.

It is found in the cell inner membrane. Its function is as follows. Part of the twin-arginine translocation (Tat) system that transports large folded proteins containing a characteristic twin-arginine motif in their signal peptide across membranes. TatA could form the protein-conducting channel of the Tat system. The polypeptide is Sec-independent protein translocase protein TatA (Chromobacterium violaceum (strain ATCC 12472 / DSM 30191 / JCM 1249 / CCUG 213 / NBRC 12614 / NCIMB 9131 / NCTC 9757 / MK)).